The primary structure comprises 504 residues: 26S proteasome non-ATPase regulatory subunit 3 (504 aa).

One can recognise a PCI domain in the interval 254–433 (ARYMYYQGRI…RDGPRYMQSS (180 aa)).

The protein belongs to the proteasome subunit S3 family. As to quaternary structure, the 26S proteasome is composed of a core protease, known as the 20S proteasome, capped at one or both ends by the 19S regulatory complex (RC). The RC is composed of at least 18 different subunits in two subcomplexes, the base and the lid, which form the portions proximal and distal to the 20S proteolytic core, respectively.

Its function is as follows. Acts as a regulatory subunit of the 26 proteasome which is involved in the ATP-dependent degradation of ubiquitinated proteins. This chain is 26S proteasome non-ATPase regulatory subunit 3 (rpn-3), found in Caenorhabditis elegans.